We begin with the raw amino-acid sequence, 149 residues long: 3-hydroxyacyl-[acyl-carrier-protein] dehydratase FabZ (149 aa).

Histidine 53 is an active-site residue.

This sequence belongs to the thioester dehydratase family. FabZ subfamily.

Its subcellular location is the cytoplasm. The enzyme catalyses a (3R)-hydroxyacyl-[ACP] = a (2E)-enoyl-[ACP] + H2O. Its function is as follows. Involved in unsaturated fatty acids biosynthesis. Catalyzes the dehydration of short chain beta-hydroxyacyl-ACPs and long chain saturated and unsaturated beta-hydroxyacyl-ACPs. The chain is 3-hydroxyacyl-[acyl-carrier-protein] dehydratase FabZ from Neisseria gonorrhoeae (strain ATCC 700825 / FA 1090).